We begin with the raw amino-acid sequence, 293 residues long: Ribosomal protein L11 methyltransferase (293 aa).

4 residues coordinate S-adenosyl-L-methionine: threonine 145, glycine 166, aspartate 188, and asparagine 230.

This sequence belongs to the methyltransferase superfamily. PrmA family.

The protein resides in the cytoplasm. It carries out the reaction L-lysyl-[protein] + 3 S-adenosyl-L-methionine = N(6),N(6),N(6)-trimethyl-L-lysyl-[protein] + 3 S-adenosyl-L-homocysteine + 3 H(+). Its function is as follows. Methylates ribosomal protein L11. This chain is Ribosomal protein L11 methyltransferase, found in Shewanella pealeana (strain ATCC 700345 / ANG-SQ1).